Consider the following 146-residue polypeptide: Mite group 2 allergen Der p 2 (146 aa).

The signal sequence occupies residues 1–17; sequence MMYKILCLSLLVAAVAR. 3 disulfides stabilise this stretch: cysteine 25/cysteine 136, cysteine 38/cysteine 44, and cysteine 90/cysteine 95.

This sequence belongs to the NPC2 family.

Its subcellular location is the secreted. This Dermatophagoides pteronyssinus (European house dust mite) protein is Mite group 2 allergen Der p 2 (DERP2).